The primary structure comprises 276 residues: Large ribosomal subunit protein uL2 (276 aa).

Disordered regions lie at residues 37–59 (QFQK…GGHK) and 224–276 (VAMN…RHKR). The segment covering 50 to 59 (TTRHKGGGHK) has biased composition (basic residues).

This sequence belongs to the universal ribosomal protein uL2 family. In terms of assembly, part of the 50S ribosomal subunit. Forms a bridge to the 30S subunit in the 70S ribosome.

One of the primary rRNA binding proteins. Required for association of the 30S and 50S subunits to form the 70S ribosome, for tRNA binding and peptide bond formation. It has been suggested to have peptidyltransferase activity; this is somewhat controversial. Makes several contacts with the 16S rRNA in the 70S ribosome. This Ralstonia nicotianae (strain ATCC BAA-1114 / GMI1000) (Ralstonia solanacearum) protein is Large ribosomal subunit protein uL2.